Consider the following 143-residue polypeptide: Putative pre-16S rRNA nuclease (143 aa).

Belongs to the YqgF nuclease family.

The protein localises to the cytoplasm. Its function is as follows. Could be a nuclease involved in processing of the 5'-end of pre-16S rRNA. The protein is Putative pre-16S rRNA nuclease of Leuconostoc mesenteroides subsp. mesenteroides (strain ATCC 8293 / DSM 20343 / BCRC 11652 / CCM 1803 / JCM 6124 / NCDO 523 / NBRC 100496 / NCIMB 8023 / NCTC 12954 / NRRL B-1118 / 37Y).